The primary structure comprises 374 residues: Chaperone protein DnaJ (374 aa).

Residues 5–70 (DYYEVLGVAR…DKRARYDRFG (66 aa)) form the J domain. The segment at 135 to 213 (GDEVTLRLPK…CKGSGILQQV (79 aa)) adopts a CR-type zinc-finger fold. Residues Cys-148, Cys-151, Cys-165, Cys-168, Cys-187, Cys-190, Cys-201, and Cys-204 each coordinate Zn(2+). CXXCXGXG motif repeat units lie at residues 148 to 155 (CDECNGSG), 165 to 172 (CRHCGGNG), 187 to 194 (CPVCRGEG), and 201 to 208 (CPKCKGSG).

Belongs to the DnaJ family. As to quaternary structure, homodimer. It depends on Zn(2+) as a cofactor.

The protein localises to the cytoplasm. Participates actively in the response to hyperosmotic and heat shock by preventing the aggregation of stress-denatured proteins and by disaggregating proteins, also in an autonomous, DnaK-independent fashion. Unfolded proteins bind initially to DnaJ; upon interaction with the DnaJ-bound protein, DnaK hydrolyzes its bound ATP, resulting in the formation of a stable complex. GrpE releases ADP from DnaK; ATP binding to DnaK triggers the release of the substrate protein, thus completing the reaction cycle. Several rounds of ATP-dependent interactions between DnaJ, DnaK and GrpE are required for fully efficient folding. Also involved, together with DnaK and GrpE, in the DNA replication of plasmids through activation of initiation proteins. In Nitratidesulfovibrio vulgaris (strain DSM 19637 / Miyazaki F) (Desulfovibrio vulgaris), this protein is Chaperone protein DnaJ.